The sequence spans 419 residues: Keratin, type I cytoskeletal 47 kDa (419 aa).

Positions 1–81 are head; sequence MSFRSSSSYS…SSSFSNFGGN (81 aa). Residues 82–117 are coil 1A; it reads DKQTMQNLNDRLASYLEKVRALEAANADLELKIREW. Residues 82 to 397 form the IF rod domain; it reads DKQTMQNLND…RLLEGEFGSL (316 aa). The interval 118–139 is linker 1; it reads YEKQKGSGIGAGSKDFSKYFEI. The tract at residues 140-231 is coil 1B; sequence ISDLRNKILS…KNHEEEMSIA (92 aa). The interval 232-254 is linker 12; that stretch reads KSSSAGQVNVEMDAAPGIDLNKI. The interval 255 to 393 is coil 2; it reads LSDMRADYET…ETYRRLLEGE (139 aa). A tail region spans residues 394 to 419; the sequence is FGSLKSSIVQATEVSTSQSSSSSKKD.

Belongs to the intermediate filament family. Heterotetramer of two type I and two type II keratins.

The chain is Keratin, type I cytoskeletal 47 kDa (xk81b2) from Xenopus laevis (African clawed frog).